We begin with the raw amino-acid sequence, 464 residues long: Cysteine--tRNA ligase (464 aa).

Zn(2+) is bound at residue cysteine 30. The 'HIGH' region signature appears at 32 to 42; sequence MTVYDYCHIGH. Zn(2+) is bound by residues cysteine 214, histidine 239, and glutamate 243. Residues 271-275 carry the 'KMSKS' region motif; that stretch reads KMSKS. ATP is bound at residue lysine 274.

This sequence belongs to the class-I aminoacyl-tRNA synthetase family. Monomer. Zn(2+) is required as a cofactor.

The protein resides in the cytoplasm. It catalyses the reaction tRNA(Cys) + L-cysteine + ATP = L-cysteinyl-tRNA(Cys) + AMP + diphosphate. This Janthinobacterium sp. (strain Marseille) (Minibacterium massiliensis) protein is Cysteine--tRNA ligase.